The following is a 233-amino-acid chain: 7-cyano-7-deazaguanine synthase 2 (233 aa).

8 to 18 (LSGGLDSTTCM) is an ATP binding site. Zn(2+) contacts are provided by Cys186, Cys194, Cys197, and Cys200.

This sequence belongs to the QueC family. As to quaternary structure, homodimer. Zn(2+) is required as a cofactor.

The catalysed reaction is 7-carboxy-7-deazaguanine + NH4(+) + ATP = 7-cyano-7-deazaguanine + ADP + phosphate + H2O + H(+). Its pathway is purine metabolism; 7-cyano-7-deazaguanine biosynthesis. Catalyzes the ATP-dependent conversion of 7-carboxy-7-deazaguanine (CDG) to 7-cyano-7-deazaguanine (preQ(0)). This is 7-cyano-7-deazaguanine synthase 2 from Desulfitobacterium hafniense (strain Y51).